The primary structure comprises 248 residues: PF03932 family protein CutC (248 aa).

Belongs to the CutC family. Homodimer.

It localises to the cytoplasm. The polypeptide is PF03932 family protein CutC (Escherichia coli O157:H7).